Reading from the N-terminus, the 376-residue chain is Putative F-box protein At1g53370 (376 aa).

The F-box domain occupies 22 to 71; sequence RNYIDSIPVDLLIDILSRFPPKSIARFYCVSKLWESILRGPDFTELYLTK.

The protein is Putative F-box protein At1g53370 of Arabidopsis thaliana (Mouse-ear cress).